Reading from the N-terminus, the 398-residue chain is Flavin-containing monooxygenase ustF1 (398 aa).

An N-terminal signal peptide occupies residues 1-22 (MTVSQVRRVAVIGAGISGVVST). 13–18 (GAGISG) contributes to the FAD binding site. N-linked (GlcNAc...) asparagine glycans are attached at residues N53, N57, N119, and N126. Residue 194–199 (GGGVSS) participates in NADP(+) binding. N-linked (GlcNAc...) asparagine glycans are attached at residues N236, N243, and N271.

This sequence belongs to the FMO family.

Its pathway is mycotoxin biosynthesis. Flavin-containing monooxygenase; part of the gene cluster that mediates the biosynthesis of the secondary metabolite ustiloxin B, an antimitotic tetrapeptide. First, ustA is processed by the subtilisin-like endoprotease Kex2 that is outside the ustiloxin B gene cluster, at the C-terminal side of Arg-Lys, after transfer to Golgi apparatus through the endoplasmic reticulum (ER). Cleavage by KEX2 generates 16 peptides YAIG-I to YAIG-XVI. To process the precursor peptide further, at least two peptidases are necessary to cleave the N-terminal and C-terminal sides of the Tyr-Ala-Ile-Gly core peptide which serves as backbone for the synthesis of ustiloxin B, through cyclization and modification of the tyrosine with a non-protein coding amino acid, norvaline. One of the two peptidases must be the serine peptidase ustP; and the other pepdidase is probably ustH. Macrocyclization of the core peptide derived from ustA requires the tyrosinase ustQ, as well as the homologous oxidases ustYa and ustYb, and leads to the production of the first cyclization product N-desmethylustiloxin F. For the formation of N-desmethylustiloxin F, three oxidation steps are required, hydroxylation at the benzylic position, hydroxylation at either the aromatic ring of Tyr or beta-position of Ile, and oxidative cyclization. UstQ may catalyze the oxidation of a phenol moiety, whereas the ustYa and ustYb are most likely responsible for the remaining two-step oxidations. N-desmethylustiloxin F is then methylated by ustM to yield ustiloxin F which in turn substrate of the cytochrome P450 monooxygenase ustC which catalyzes the formation of S-deoxyustiloxin H. The flavoprotein monooxygenases ustF1 and ustF2 then participate in the modification of the side chain of S-deoxyustiloxin H, leading to the synthesis of an oxime intermediate, via ustiloxin H. Finally, carboxylative dehydration performed by the cysteine desulfurase-like protein ustD yields ustiloxin B. This is Flavin-containing monooxygenase ustF1 from Aspergillus flavus (strain ATCC 200026 / FGSC A1120 / IAM 13836 / NRRL 3357 / JCM 12722 / SRRC 167).